We begin with the raw amino-acid sequence, 365 residues long: Phosphoserine aminotransferase (365 aa).

Residue arginine 42 coordinates L-glutamate. Pyridoxal 5'-phosphate-binding positions include 76 to 77, tryptophan 103, threonine 154, aspartate 175, and glutamine 198; that span reads AR. Lysine 199 is modified (N6-(pyridoxal phosphate)lysine). 242 to 243 is a binding site for pyridoxal 5'-phosphate; that stretch reads NT.

It belongs to the class-V pyridoxal-phosphate-dependent aminotransferase family. SerC subfamily. In terms of assembly, homodimer. The cofactor is pyridoxal 5'-phosphate.

The protein localises to the cytoplasm. The catalysed reaction is O-phospho-L-serine + 2-oxoglutarate = 3-phosphooxypyruvate + L-glutamate. It catalyses the reaction 4-(phosphooxy)-L-threonine + 2-oxoglutarate = (R)-3-hydroxy-2-oxo-4-phosphooxybutanoate + L-glutamate. The protein operates within amino-acid biosynthesis; L-serine biosynthesis; L-serine from 3-phospho-D-glycerate: step 2/3. It functions in the pathway cofactor biosynthesis; pyridoxine 5'-phosphate biosynthesis; pyridoxine 5'-phosphate from D-erythrose 4-phosphate: step 3/5. Its function is as follows. Catalyzes the reversible conversion of 3-phosphohydroxypyruvate to phosphoserine and of 3-hydroxy-2-oxo-4-phosphonooxybutanoate to phosphohydroxythreonine. This is Phosphoserine aminotransferase from Blochmanniella floridana.